A 155-amino-acid chain; its full sequence is MSTATAPRLPAPRSGASYHYQTTAAPAANTLSFAGHARQAARASGPRLSSRFVASAAAVLHKVKLVGPDGTEHEFEAPDDTYILEAAETAGVELPFSCRAGSCSTCAGRMSAGEVDQSEGSFLDDGQMAEGYLLTCISYPKADCVIHTHKEEDLY.

A chloroplast-targeting transit peptide spans 1-58; sequence MSTATAPRLPAPRSGASYHYQTTAAPAANTLSFAGHARQAARASGPRLSSRFVASAAA. The 2Fe-2S ferredoxin-type domain maps to 61–152; the sequence is HKVKLVGPDG…DCVIHTHKEE (92 aa). The [2Fe-2S] cluster site is built by cysteine 98, cysteine 103, cysteine 106, and cysteine 136.

The protein belongs to the 2Fe2S plant-type ferredoxin family. The cofactor is [2Fe-2S] cluster.

The protein localises to the plastid. It is found in the chloroplast. In terms of biological role, ferredoxins are iron-sulfur proteins that transfer electrons in a wide variety of metabolic reactions. This chain is Ferredoxin-6, chloroplastic (FDX6), found in Zea mays (Maize).